The sequence spans 108 residues: Signal recognition particle 19 kDa protein (108 aa).

The protein belongs to the SRP19 family. As to quaternary structure, part of the signal recognition particle protein translocation system, which is composed of SRP and FtsY. Archaeal SRP consists of a 7S RNA molecule of 300 nucleotides and two protein subunits: SRP54 and SRP19.

It is found in the cytoplasm. Its function is as follows. Involved in targeting and insertion of nascent membrane proteins into the cytoplasmic membrane. Binds directly to 7S RNA and mediates binding of the 54 kDa subunit of the SRP. This Thermococcus kodakarensis (strain ATCC BAA-918 / JCM 12380 / KOD1) (Pyrococcus kodakaraensis (strain KOD1)) protein is Signal recognition particle 19 kDa protein.